The sequence spans 365 residues: Carbohydrate sulfotransferase 10 (365 aa).

Topologically, residues 1–6 (MRRHWL) are cytoplasmic. A helical; Signal-anchor for type II membrane protein transmembrane segment spans residues 7 to 27 (LVGACGWVLLILMFVSKFINF). Residues 28–356 (SFRIPGDYAG…RYQGDFSLFD (329 aa)) are Lumenal-facing. Residues N99 and N104 are each glycosylated (N-linked (GlcNAc...) asparagine). 3'-phosphoadenylyl sulfate-binding positions include 132-138 (PKVGNTQ) and 194-202 (RDPFERLIS). The N-linked (GlcNAc...) asparagine glycan is linked to N325.

This sequence belongs to the sulfotransferase 2 family.

The protein localises to the golgi apparatus membrane. Its function is as follows. Catalyzes the transfer of sulfate to position 3 of terminal glucuronic acid of both protein- and lipid-linked oligosaccharides. Participates in biosynthesis of HNK-1 carbohydrate structure, a sulfated glucuronyl-lactosaminyl residue carried by many neural recognition molecules. This is Carbohydrate sulfotransferase 10 (chst10) from Danio rerio (Zebrafish).